Here is a 115-residue protein sequence, read N- to C-terminus: SOSS complex subunit C homolog (115 aa).

Belongs to the SOSS-C family.

The sequence is that of SOSS complex subunit C homolog from Drosophila grimshawi (Hawaiian fruit fly).